A 1103-amino-acid polypeptide reads, in one-letter code: MFQLPVNNLGSLRKARKTVKKILSDIGLEYCKEHIEDFKQFEPNDFYLKNTTWEDVGLWDPSLTKNQDYRTKPFCCSACPFSSKFFSAYKSHFRNVHSEDFENRILLNCPYCTFNADKKTLETHIKIFHAPNSSAPSSSLSTFKDKNKNDGLKPKQADNVEQAVYYCKKCTYRDPLYEIVRKHIYREHFQHVAAPYIAKAGEKSLNGAVSLGTNAREECNIHCKRCLFMPKSYEALVQHVIEDHERIGYQVTAMIGHTNVVVPRAKPLMLIAPKPQEKKSMGLPPRISSLASGNVRSLPSQQMVNRLSIPKPNLNSTGVNMMSNVHLQQNNYGVKSVGQSYGVGQSVRLGLGGNAPVSIPQQSQSVKQLLPSGNGRSYGLGAEQRPPAAARYSLQTANTSSLPPGQVKSPSVSQSQASRVLGQSSSKPPPAATGPPPSNHCATQKWKICTICNELFPENVYSVHFEKEHKAEKVPAVANYIMKIHNFTSKCLYCNRYLPTDTLLNHMLIHGLSCPYCRSTFNDVEKMAAHMRMVHIDEEMGPKTDSTLSFDLTLQQGSHTNIHLLVTTYNLRDAPAESVAYHAQNNAPVPPKPQPKVQEKADVPVKSSPQAAVPYKKDVGKTLCPLCFSILKGPISDALAHHLRERHQVIQTVHPVEKKLTYKCIHCLGVYTSNMTASTITLHLVHCRGVGKTQNGQDKTNAPSRLNQSPGLAPVKRTYEQMEFPLLKKRKLEDENDSPGCFEEKPEEPVVLALDPKGHEDDSYEARKSFLTKYFNKQPYPTRREIEKLAASLWLWKSDIASHFSNKRKKCVRDCEKYKPGVLLGFNMKELNKVKHEMDFDAEWLFENHDEKASRVNASKTVDKKLNLGKEDDSFSDSFEHLEEESNGSGGPFDPVFEVEPKIPSDNAEEPVPKVIPEGALESEKLDQKEEEDGSKYETIHLTEERAKLMHDASDSEVDQDDVVEWKDGASPSESGPGSRQVSDFEDNTCEMKPGTWSDESSQSEDARSSKPAAKKKATVQDDTEQLKWKNSSYGKVEGFWSKDQSQWENASENAERLPNPQIEWQNSTIDSEDGEQFDSMTDGVADPMHGSLTGVKLSSQQA.

Glycyl lysine isopeptide (Lys-Gly) (interchain with G-Cter in SUMO2) cross-links involve residues lysine 39 and lysine 72. The C2H2-type 1; degenerate zinc-finger motif lies at 74–97; it reads FCCSACPFSSKFFSAYKSHFRNVH. Serine 98 carries the post-translational modification Phosphoserine. The C2H2-type 2; degenerate zinc finger occupies 107–129; it reads LNCPYCTFNADKKTLETHIKIFH. Residues 133-154 form a disordered region; sequence SSAPSSSLSTFKDKNKNDGLKP. The span at 143–154 shows a compositional bias: basic and acidic residues; that stretch reads FKDKNKNDGLKP. Glycyl lysine isopeptide (Lys-Gly) (interchain with G-Cter in SUMO2) cross-links involve residues lysine 144 and lysine 155. A C2H2-type 3; degenerate zinc finger spans residues 165–188; sequence YYCKKCTYRDPLYEIVRKHIYREH. Glycyl lysine isopeptide (Lys-Gly) (interchain with G-Cter in SUMO2) cross-links involve residues lysine 203, lysine 231, lysine 266, lysine 274, lysine 278, lysine 279, lysine 311, and lysine 335. The C2H2-type 4; degenerate zinc-finger motif lies at 221–244; that stretch reads IHCKRCLFMPKSYEALVQHVIEDH. At arginine 348 the chain carries Asymmetric dimethylarginine. The interval 354 to 361 is neuroprotective peptide (NAP); the sequence is NAPVSIPQ. A disordered region spans residues 360 to 439; that stretch reads PQQSQSVKQL…PAATGPPPSN (80 aa). Residues lysine 367 and lysine 408 each participate in a glycyl lysine isopeptide (Lys-Gly) (interchain with G-Cter in SUMO2) cross-link. Polar residues predominate over residues 393 to 423; sequence SLQTANTSSLPPGQVKSPSVSQSQASRVLGQ. Phosphoserine occurs at positions 409 and 413. A Glycyl lysine isopeptide (Lys-Gly) (interchain with G-Cter in SUMO2) cross-link involves residue lysine 427. Residues 427-438 are compositionally biased toward pro residues; it reads KPPPAATGPPPS. The segment at 447 to 469 adopts a C2H2-type 5; atypical zinc-finger fold; sequence KICTICNELFPENVYSVHFEKEH. 2 consecutive C2H2-type zinc fingers follow at residues 489-510 and 512-535; these read SKCL…MLIH and LSCP…RMVH. Glycyl lysine isopeptide (Lys-Gly) (interchain with G-Cter in SUMO2) cross-links involve residues lysine 600 and lysine 606. Serine 608 carries the post-translational modification Phosphoserine. Glycyl lysine isopeptide (Lys-Gly) (interchain with G-Cter in SUMO2) cross-links involve residues lysine 616, lysine 621, lysine 632, and lysine 658. A C2H2-type 8; atypical zinc finger spans residues 622–647; the sequence is TLCPLCFSILKGPISDALAHHLRERH. The segment at 662–686 adopts a C2H2-type 9; atypical zinc-finger fold; the sequence is YKCIHCLGVYTSNMTASTITLHLVH. The tract at residues 691–712 is disordered; sequence GKTQNGQDKTNAPSRLNQSPGL. Polar residues predominate over residues 692–710; that stretch reads KTQNGQDKTNAPSRLNQSP. Lysine 699 is covalently cross-linked (Glycyl lysine isopeptide (Lys-Gly) (interchain with G-Cter in SUMO2)). At serine 709 the chain carries Phosphoserine. Glycyl lysine isopeptide (Lys-Gly) (interchain with G-Cter in SUMO2) cross-links involve residues lysine 716, lysine 728, and lysine 731. Serine 738 bears the Phosphoserine mark. Lysine 745 is covalently cross-linked (Glycyl lysine isopeptide (Lys-Gly) (interchain with G-Cter in SUMO2)). The segment at residues 754–814 is a DNA-binding region (homeobox); sequence LDPKGHEDDS…SNKRKKCVRD (61 aa). Position 805 is a phosphoserine (serine 805). Residues lysine 807, lysine 829, and lysine 835 each participate in a glycyl lysine isopeptide (Lys-Gly) (interchain with G-Cter in SUMO2) cross-link. The segment at 873–1029 is disordered; sequence DSFSDSFEHL…VQDDTEQLKW (157 aa). Phosphoserine is present on residues serine 876, serine 878, serine 886, serine 889, and serine 905. Residues lysine 914, lysine 929, and lysine 936 each participate in a glycyl lysine isopeptide (Lys-Gly) (interchain with G-Cter in SUMO2) cross-link. Residues 922-954 show a composition bias toward basic and acidic residues; it reads ESEKLDQKEEEDGSKYETIHLTEERAKLMHDAS. Serine 954 and serine 956 each carry phosphoserine. Over residues 972–982 the composition is skewed to polar residues; sequence PSESGPGSRQV. A Glycyl lysine isopeptide (Lys-Gly) (interchain with G-Cter in SUMO2) cross-link involves residue lysine 1017. Residues lysine 1036 and lysine 1043 each carry the N6-acetyllysine; alternate modification. Residues lysine 1036 and lysine 1043 each participate in a glycyl lysine isopeptide (Lys-Gly) (interchain with G-Cter in SUMO2); alternate cross-link. The tract at residues 1045–1103 is disordered; the sequence is QSQWENASENAERLPNPQIEWQNSTIDSEDGEQFDSMTDGVADPMHGSLTGVKLSSQQA. Serine 1072 is subject to Phosphoserine.

As to quaternary structure, interacts (via N-terminal region) with beta-catenin/CTNNB1 (via the central armadillo domains); interaction is direct and stabilizes CTNNB1 by modulating its phosphorylation by glycogen synthase kinase-3 beta GSK3B.

It localises to the nucleus. The protein resides in the chromosome. In terms of biological role, may be involved in transcriptional regulation. May mediate some of the neuroprotective peptide VIP-associated effects involving normal growth and cancer proliferation. Positively modulates WNT-beta-catenin/CTNN1B signaling, acting by regulating phosphorylation of, and thereby stabilizing, CTNNB1. May be required for neural induction and neuronal differentiation. May be involved in erythroid differentiation. The polypeptide is Activity-dependent neuroprotector homeobox protein (Adnp) (Rattus norvegicus (Rat)).